A 70-amino-acid polypeptide reads, in one-letter code: Brevinin-1Vb (70 aa).

The first 22 residues, 1 to 22 (MFTLKKSLLLLFFLGTINLSLC), serve as a signal peptide directing secretion. Positions 23-44 (EEERNAEEERRDEPDEMNVEVE) are excised as a propeptide. A disulfide bridge connects residues cysteine 64 and cysteine 70.

In terms of tissue distribution, expressed by the skin glands.

The protein localises to the secreted. Antimicrobial peptide. The protein is Brevinin-1Vb of Odorrana versabilis (Chinese bamboo leaf odorous frog).